A 133-amino-acid chain; its full sequence is MAIQQPEQFYGTGRRKSAVARVFLRPGEGKIIVNGKEFQTYFRGLLRAVHALQAFRETGTAGRYDAVITVNGGGPTGQADAIKLGIARALLKVNPDFRAQMKPKGLLTRDPREVERKKYGLKKARRAPQFSKR.

Residues 102–133 (KPKGLLTRDPREVERKKYGLKKARRAPQFSKR) form a disordered region. The segment covering 107–118 (LTRDPREVERKK) has biased composition (basic and acidic residues). Positions 119–133 (YGLKKARRAPQFSKR) are enriched in basic residues.

This sequence belongs to the universal ribosomal protein uS9 family.

The polypeptide is Small ribosomal subunit protein uS9 (Deinococcus deserti (strain DSM 17065 / CIP 109153 / LMG 22923 / VCD115)).